A 473-amino-acid chain; its full sequence is Photosystem II CP43 reaction center protein (473 aa).

A propeptide spanning residues 1–14 is cleaved from the precursor; that stretch reads MKTLYSLRRFYPVE. T15 carries the N-acetylthreonine modification. The residue at position 15 (T15) is a Phosphothreonine. Transmembrane regions (helical) follow at residues 69–93, 134–155, 178–200, 255–275, and 291–312; these read LFEV…PHLA, LIGP…KDKN, KALY…RKIT, KPFA…LSYS, and WFNN…ASQA. Position 367 (E367) interacts with [CaMn4O5] cluster. A helical transmembrane segment spans residues 447-471; it reads RARAAAAGFEKGIDRDTEPVLSMTP.

The protein belongs to the PsbB/PsbC family. PsbC subfamily. As to quaternary structure, PSII is composed of 1 copy each of membrane proteins PsbA, PsbB, PsbC, PsbD, PsbE, PsbF, PsbH, PsbI, PsbJ, PsbK, PsbL, PsbM, PsbT, PsbX, PsbY, PsbZ, Psb30/Ycf12, at least 3 peripheral proteins of the oxygen-evolving complex and a large number of cofactors. It forms dimeric complexes. It depends on Binds multiple chlorophylls and provides some of the ligands for the Ca-4Mn-5O cluster of the oxygen-evolving complex. It may also provide a ligand for a Cl- that is required for oxygen evolution. PSII binds additional chlorophylls, carotenoids and specific lipids. as a cofactor.

Its subcellular location is the plastid. It localises to the chloroplast thylakoid membrane. In terms of biological role, one of the components of the core complex of photosystem II (PSII). It binds chlorophyll and helps catalyze the primary light-induced photochemical processes of PSII. PSII is a light-driven water:plastoquinone oxidoreductase, using light energy to abstract electrons from H(2)O, generating O(2) and a proton gradient subsequently used for ATP formation. In Angiopteris evecta (Mule's foot fern), this protein is Photosystem II CP43 reaction center protein.